Here is a 301-residue protein sequence, read N- to C-terminus: Cytosolic sulfotransferase 3 (301 aa).

53 to 58 (KAGTTW) is a 3'-phosphoadenylyl sulfate binding site. The active-site Proton acceptor is the His115. Residues Arg137, Ser145, Tyr201, 235–240 (VQFDAM), and 263–265 (RKG) each bind 3'-phosphoadenylyl sulfate.

The protein belongs to the sulfotransferase 1 family.

The protein resides in the cytoplasm. Inhibited by Hg(2+), Co(2+), Zn(2+), Cd(2+), Cu(2+) and Pb(2+) ions. Activated slightly by Mn(2+), Ca(2+) and Mg(2+) ions. In terms of biological role, sulfotransferase that utilizes 3'-phospho-5'-adenylyl sulfate (PAPS) as sulfonate donor to catalyze the sulfate conjugation of a variety of xenobiotic and endogenous compounds, including dopamine, T3 (triiodo-L-thyronine), T4 (thyroxine), estrone, DHEA (dehydroepiandrosterone), flavonoids, isoflavonoids and other phenolic compounds. This is Cytosolic sulfotransferase 3 from Danio rerio (Zebrafish).